A 177-amino-acid chain; its full sequence is MLEKLIERVLFATRWLLAPLCIAMSLVLVVLGYVFMKELWHMLSHLNTISETDLVLSALGLVDLLFMAGLVLMVLLASYESFVSKLDKVDASEITWLKHTDFNALKLKVSLSIVAISAIFLLKRYMSLEDVLSSIPKDTPLSHNPIFWQVVIHLVFVCSALLAAVTNNIAFSQNKAH.

3 helical membrane passes run 15 to 35, 54 to 74, and 145 to 165; these read WLLA…GYVF, LVLS…VLMV, and PIFW…LAAV.

It belongs to the UPF0114 family.

Its subcellular location is the cell membrane. In Helicobacter pylori (strain ATCC 700392 / 26695) (Campylobacter pylori), this protein is UPF0114 protein HP_0189.